The following is a 242-amino-acid chain: Protein GrpE (242 aa).

Disordered regions lie at residues 1–75 and 93–136; these read MSDD…DDEL and VADL…QQIK. Positions 23–37 are enriched in low complexity; it reads DAESSAAEDASAADD. The span at 38-49 shows a compositional bias: acidic residues; that stretch reads AAPEESTGDEQA. A compositionally biased stretch (polar residues) spans 50–64; that stretch reads GETTAESSDAESVTV. A compositionally biased stretch (acidic residues) spans 96–108; the sequence is LETERDEAEETAS. The span at 124–133 shows a compositional bias: basic residues; it reads YKKRAKKRQQ.

Belongs to the GrpE family. Homodimer.

The protein localises to the cytoplasm. In terms of biological role, participates actively in the response to hyperosmotic and heat shock by preventing the aggregation of stress-denatured proteins, in association with DnaK and GrpE. It is the nucleotide exchange factor for DnaK and may function as a thermosensor. Unfolded proteins bind initially to DnaJ; upon interaction with the DnaJ-bound protein, DnaK hydrolyzes its bound ATP, resulting in the formation of a stable complex. GrpE releases ADP from DnaK; ATP binding to DnaK triggers the release of the substrate protein, thus completing the reaction cycle. Several rounds of ATP-dependent interactions between DnaJ, DnaK and GrpE are required for fully efficient folding. This Haloferax mediterranei (strain ATCC 33500 / DSM 1411 / JCM 8866 / NBRC 14739 / NCIMB 2177 / R-4) (Halobacterium mediterranei) protein is Protein GrpE.